We begin with the raw amino-acid sequence, 308 residues long: Ribonuclease Z (308 aa).

Zn(2+)-binding residues include H61, H63, D65, H66, H142, D211, and H270. D65 acts as the Proton acceptor in catalysis.

It belongs to the RNase Z family. In terms of assembly, homodimer. Requires Zn(2+) as cofactor.

The enzyme catalyses Endonucleolytic cleavage of RNA, removing extra 3' nucleotides from tRNA precursor, generating 3' termini of tRNAs. A 3'-hydroxy group is left at the tRNA terminus and a 5'-phosphoryl group is left at the trailer molecule.. In terms of biological role, zinc phosphodiesterase, which displays some tRNA 3'-processing endonuclease activity. Probably involved in tRNA maturation, by removing a 3'-trailer from precursor tRNA. The chain is Ribonuclease Z from Clostridium beijerinckii (strain ATCC 51743 / NCIMB 8052) (Clostridium acetobutylicum).